A 241-amino-acid polypeptide reads, in one-letter code: Adenylate kinase 3 (241 aa).

38 to 43 (GCGKGT) is a binding site for ATP. The interval 58–87 (ATGDMLRAAVAAKTPLGIKAKEAMDKGELV) is NMP. AMP-binding positions include T59, R64, 85-87 (ELV), 113-116 (GFPR), and Q120. Residues 154-191 (GRWIHPSSGRSYHTKFAPPKTPGLDDVTGEPLIQRKDD) form an LID region. An ATP-binding site is contributed by R155. AMP is bound by residues R188 and R199.

Belongs to the adenylate kinase family.

The protein resides in the cytoplasm. It carries out the reaction AMP + ATP = 2 ADP. Functionally, catalyzes the reversible transfer of the terminal phosphate group between ATP and AMP. Plays an important role in cellular energy homeostasis and in adenine nucleotide metabolism. In Oryza sativa subsp. japonica (Rice), this protein is Adenylate kinase 3 (ADK-A).